A 78-amino-acid polypeptide reads, in one-letter code: Large ribosomal subunit protein bL28 (78 aa).

The disordered stretch occupies residues 1 to 26 (MSAYCQVTGRKPSFGKSVSHSHRRTN).

The protein belongs to the bacterial ribosomal protein bL28 family.

This Corynebacterium jeikeium (strain K411) protein is Large ribosomal subunit protein bL28.